Reading from the N-terminus, the 396-residue chain is Putative nickel insertion protein (396 aa).

Belongs to the LarC family.

This chain is Putative nickel insertion protein, found in Methanococcoides burtonii (strain DSM 6242 / NBRC 107633 / OCM 468 / ACE-M).